Reading from the N-terminus, the 364-residue chain is Growth hormone secretagogue receptor type 1 (364 aa).

Residues 1–40 (MWNATPSEEPEPNVTLDLDWDASPGNDSLSDELLPLFPAP) are Extracellular-facing. Asn-13 and Asn-26 each carry an N-linked (GlcNAc...) asparagine glycan. Residues 41–66 (LLAGVTATCVALFVVGISGNLLTMLV) form a helical membrane-spanning segment. The Cytoplasmic segment spans residues 67-72 (VSRFRE). The chain crosses the membrane as a helical span at residues 73–96 (LRTTTNLYLSSMAFSDLLIFLCMP). Residues 97-117 (LDLVRLWQYRPWNFGDLLCKL) are Extracellular-facing. Cys-115 and Cys-197 form a disulfide bridge. The helical transmembrane segment at 118–139 (FQFVSESCTYATVLTITALSVE) threads the bilayer. The Cytoplasmic portion of the chain corresponds to 140-162 (RYFAICFPLRAKVVVTKGRVKLV). The helical transmembrane segment at 163 to 183 (ILVIWAVAFCSAGPIFVLVGV) threads the bilayer. At 184–211 (EHENGTDPRDTNECRATEFAVRSGLLTV) the chain is on the extracellular side. Asn-187 carries an N-linked (GlcNAc...) asparagine glycan. A helical membrane pass occupies residues 212–235 (MVWVSSVFFFLPVFCLTVLYSLIG). Residues 236–263 (RKLWRRRGDAAVGSSLRDQNHKQTVKML) lie on the Cytoplasmic side of the membrane. The chain crosses the membrane as a helical span at residues 264-285 (AVVVFAFILCWLPFHVGRYLFS). Over 286–302 (KSFEPGSLEIAQISQYC) the chain is Extracellular. A helical transmembrane segment spans residues 303 to 326 (NLVSFVLFYLSAAINPILYNIMSK). The Cytoplasmic segment spans residues 327 to 364 (KYRVAVFKLLGFESFSQRKLSTLKDESSRAWTKSSINT).

The protein belongs to the G-protein coupled receptor 1 family.

It is found in the cell membrane. Receptor for ghrelin, coupled to G-alpha-11 proteins. Stimulates growth hormone secretion. Also binds other growth hormone releasing peptides (GHRP) (e.g. Met-enkephalin and GHRP-6) as well as non-peptide, low molecular weight secretagogues (e.g. L-692,429, MK-0677, adenosine). The protein is Growth hormone secretagogue receptor type 1 (Ghsr) of Mus musculus (Mouse).